Consider the following 1189-residue polypeptide: MTAPQTDDVVTGRIAAIWAGLLDRPEIGIDDNVFRLGASSVMAVRAAARIREALDTPLPLRDVFESPSPAALAKRIRASRSTAPTASGPPRTAPVDSTATAPLTFQQEPMWLFDRMQPGNATYTIHFALRHEGHLDLGVLDRCVRDVVRRHAVLRTVFPSVDDRPAQQVLDRAHIPLGESDLRALPEAERPVAAARIAAREAQAPFDLSTGPMLRVRVLHLSDTRQRLLLTMPHIVTDAWSDDILVRELNHLYRAHTDGIAPALPPLPVQYHDWAARQRAELAGTEAELLDWWRHHLAGVPPLLELPADRPRAAVKRHRGGRLLFDIPESVTRRLEGLAKDEGTTPYAVLLAGFAALLHRLTGQDDLLVGSPVAGRTHTETEGLVGLFVNTVAVRCDVAGRPSFLELVRRTRRTVVESFARQELPFHRLVEELAPVRSPAYTPLVQVMLALQNTPDRDGREPGEGPFAREESGGDTGSAMFDLTLFVTGSASGMRGEWEYDSDLFDRERVAELGPQLVTLLDAALDRTDLPVALLPLQEPAARDRMVQAWNDTADVLPGGPDADSLPALLSAQAHRTPDAVALRTDDGAELTYRQLHLRADRLARRLLSYGLAPESVVAVACERSFEMVVALLAVLKAGCAYLPIDPGDPAERTAYLLRDSGARVLLTLHRHTANLPDADGTTVVTLDEPDPSGDMQDTTSALPGIAPGQLAYLIYTSGSTGRPKGVLNEHGPVCNRIRWGMRAFPPGPGTIVLQKTPIHFDVSVWEMFWTLATGATLVLARPDGHRDPQYLAGRLVEEGVTDVHFVPSMLAAFLDVGALPEGHSLRRVFCSGEALSPGLRDRLFARLPHVELHNLYGPTEAAIEVTHWRCRPGEPTVPIGRPIANARCYVLDAELNPVPPGVPGELWLGGVPVARGYHGRADLTAERFLPDPYGPAGSRMYRSGDLARWRRDGVLEYLGREDGQVKLRGQRLELGEIEATLAGHAEVADVVVDVRGTGPQDRRLVAYVRPARPGRDEQLRTTLRELAAARLPAYMRPSSYVTLDRVPLTPSGKTDRKALPDPAAGEQPRSGRGAAPGTPAERELAGIWAELLGAGEVGGDDNFFEIGGHSLLAARMTGRASTAFGVDLPVSLAFEHPVLRDFALAVVTAQAATDSAATERLLAELEALADTELEALPDEDGPDGRSGE.

One can recognise a Carrier 1 domain in the interval 5 to 80 (QTDDVVTGRI…ALAKRIRASR (76 aa)). An O-(pantetheine 4'-phosphoryl)serine modification is found at Ser40. 2 disordered regions span residues 75-97 (RIRA…PVDS) and 454-476 (TPDR…GGDT). The condensation stretch occupies residues 100–541 (TAPLTFQQEP…VALLPLQEPA (442 aa)). Over residues 455–472 (PDRDGREPGEGPFAREES) the composition is skewed to basic and acidic residues. The segment at 572-969 (AQAHRTPDAV…GREDGQVKLR (398 aa)) is adenylation. The tract at residues 1045–1081 (DRVPLTPSGKTDRKALPDPAAGEQPRSGRGAAPGTPA) is disordered. The 76-residue stretch at 1076-1151 (APGTPAEREL…DFALAVVTAQ (76 aa)) folds into the Carrier 2 domain. Ser1111 bears the O-(pantetheine 4'-phosphoryl)serine mark.

This sequence belongs to the NRP synthetase family. It depends on pantetheine 4'-phosphate as a cofactor.

It carries out the reaction holo-[peptidyl-carrier protein] + L-alanine + ATP = L-alanyl-[peptidyl-carrier protein] + AMP + diphosphate. Its pathway is secondary metabolite biosynthesis; bialaphos biosynthesis. In terms of biological role, involved in the biosynthesis of phosphinothricin tripeptide (PTT), also known as bialaphos (BA), a natural-product antibiotic and potent herbicide. Adenylates L-alanine and loads it onto a peptidyl carrier domain via a thioester linkage to the phosphopanthetheine moiety. Shows weaker activity with aminobutyric acid and L-serine. The polypeptide is Phosphinothricin tripeptide synthetase PhsB (Streptomyces viridochromogenes (strain DSM 40736 / JCM 4977 / BCRC 1201 / Tue 494)).